The chain runs to 236 residues: Eukaryotic translation initiation factor 3 subunit J (236 aa).

The disordered stretch occupies residues 1 to 88 (MADDWESAAD…EAEAQRVASL (88 aa)). A compositionally biased stretch (acidic residues) spans 28–46 (GEDEDEDIKDSWEDEEEKK). Composition is skewed to basic and acidic residues over residues 47 to 58 (DEEKPTKTEAPA) and 68 to 77 (AKLEQQARLE).

Belongs to the eIF-3 subunit J family. Component of the eukaryotic translation initiation factor 3 (eIF-3) complex. The eIF-3 complex interacts with pix.

It is found in the cytoplasm. Component of the eukaryotic translation initiation factor 3 (eIF-3) complex, which is involved in protein synthesis of a specialized repertoire of mRNAs and, together with other initiation factors, stimulates binding of mRNA and methionyl-tRNAi to the 40S ribosome. The eIF-3 complex specifically targets and initiates translation of a subset of mRNAs involved in cell proliferation. The chain is Eukaryotic translation initiation factor 3 subunit J from Drosophila erecta (Fruit fly).